The sequence spans 136 residues: Large ribosomal subunit protein uL16c (136 aa).

It belongs to the universal ribosomal protein uL16 family. In terms of assembly, part of the 50S ribosomal subunit.

The protein localises to the plastid. It is found in the chloroplast. In Oryza nivara (Indian wild rice), this protein is Large ribosomal subunit protein uL16c.